A 99-amino-acid polypeptide reads, in one-letter code: Large ribosomal subunit protein eL30 (99 aa).

It belongs to the eukaryotic ribosomal protein eL30 family.

The chain is Large ribosomal subunit protein eL30 from Methanosarcina acetivorans (strain ATCC 35395 / DSM 2834 / JCM 12185 / C2A).